The chain runs to 499 residues: BTB/POZ domain-containing protein At5g60050 (499 aa).

Low complexity predominate over residues 18 to 30; the sequence is PSLSFSPSRISSP. Positions 18-57 are disordered; sequence PSLSFSPSRISSPIKLSTASPPLPPPPPPPPNESTLSNPT. Positions 38–49 are enriched in pro residues; sequence PPLPPPPPPPPN. In terms of domain architecture, BTB spans 99 to 172; the sequence is GDVKLTVVGK…MYSDDLKKKL (74 aa).

It participates in protein modification; protein ubiquitination. In terms of biological role, may act as a substrate-specific adapter of an E3 ubiquitin-protein ligase complex (CUL3-RBX1-BTB) which mediates the ubiquitination and subsequent proteasomal degradation of target proteins. This Arabidopsis thaliana (Mouse-ear cress) protein is BTB/POZ domain-containing protein At5g60050.